A 241-amino-acid chain; its full sequence is Tetraspanin-1 (241 aa).

Helical transmembrane passes span 12 to 32 (ILFN…GIWV), 53 to 73 (FVNV…LGFL), and 89 to 109 (FFSI…VALV). Asparagine 154 is a glycosylation site (N-linked (GlcNAc...) asparagine). Residues 212–232 (AVTVGGVAVGVAALELAAMVV) traverse the membrane as a helical segment.

This sequence belongs to the tetraspanin (TM4SF) family. Interacts with SLC19A2. Interacts with NTRK1/TRKA.

The protein resides in the cell membrane. The protein localises to the lysosome membrane. Structural component of specialized membrane microdomains known as tetraspanin-enriched microdomains (TERMs), which act as platforms for receptor clustering and signaling. Participates thereby in diverse biological functions such as cell signal transduction, adhesion, migration and protein trafficking. Regulates neuronal differentiation in response to NGF by facilitating NGF-mediated activation of NTRK1/TRKA receptor tyrosine kinase and subsequent downstream signaling pathways. Plays a role in the inhibition of TNFalpha-induced apoptosis. Mechanistically, inhibits the NF-kappa-B signaling pathway by blocking phosphorylation of CHUK. Also promotes the stability of the thiamine transporter 1/SLC19A2 in intestinal epithelial cells leading to an increase of thiamine uptake process. This chain is Tetraspanin-1 (Tspan1), found in Rattus norvegicus (Rat).